A 313-amino-acid polypeptide reads, in one-letter code: Pyrimidine-specific ribonucleoside hydrolase RihB (313 aa).

Aspartate 11 (proton acceptor) is an active-site residue. Ca(2+) is bound by residues aspartate 11, aspartate 16, and valine 124. Residues glutamine 227 and histidine 239 each contribute to the substrate site. Position 240 (aspartate 240) interacts with Ca(2+).

This sequence belongs to the IUNH family. RihB subfamily. As to quaternary structure, homotetramer. Requires Ca(2+) as cofactor.

It carries out the reaction a pyrimidine ribonucleoside + H2O = a pyrimidine nucleobase + D-ribose. Hydrolyzes cytidine or uridine to ribose and cytosine or uracil, respectively. Has a clear preference for cytidine over uridine. Strictly specific for ribonucleosides. The protein is Pyrimidine-specific ribonucleoside hydrolase RihB of Escherichia coli (strain K12 / DH10B).